A 308-amino-acid chain; its full sequence is Limonin dehydrogenase (308 aa).

The protein belongs to the aldehyde dehydrogenase family.

It localises to the periplasm. Completely inhibited by HgCl(2), CoCl(2) and CaCl(2). Catalyzes the NAD(+)-dependent conversion of limonin. This chain is Limonin dehydrogenase, found in Pseudomonas putida (Arthrobacter siderocapsulatus).